A 338-amino-acid polypeptide reads, in one-letter code: DNA-directed RNA polymerase subunit alpha (338 aa).

Polar residues predominate over residues 1 to 10; it reads MIQKNWQTLE. Residues 1 to 24 are disordered; sequence MIQKNWQTLEKPSKLDITPGSDPK. The alpha N-terminal domain (alpha-NTD) stretch occupies residues 1–234; that stretch reads MIQKNWQTLE…DQLQMFINFE (234 aa). The tract at residues 250–338 is alpha C-terminal domain (alpha-CTD); the sequence is FNKNLLRKVD…DLAKRLEEPY (89 aa).

Belongs to the RNA polymerase alpha chain family. In terms of assembly, homodimer. The RNAP catalytic core consists of 2 alpha, 1 beta, 1 beta' and 1 omega subunit. When a sigma factor is associated with the core the holoenzyme is formed, which can initiate transcription.

The catalysed reaction is RNA(n) + a ribonucleoside 5'-triphosphate = RNA(n+1) + diphosphate. DNA-dependent RNA polymerase catalyzes the transcription of DNA into RNA using the four ribonucleoside triphosphates as substrates. This is DNA-directed RNA polymerase subunit alpha from Rhodospirillum centenum (strain ATCC 51521 / SW).